Reading from the N-terminus, the 270-residue chain is Phospholysine phosphohistidine inorganic pyrophosphate phosphatase (270 aa).

Mg(2+) is bound by residues D17 and S19. Residues 17 to 19, 54 to 55, and K189 each bind substrate; these read DIS and TN. Residue D214 participates in Mg(2+) binding.

This sequence belongs to the HAD-like hydrolase superfamily. As to quaternary structure, homodimer. Requires Mg(2+) as cofactor. As to expression, detected in liver (at protein level).

The protein localises to the cytoplasm. It is found in the nucleus. It carries out the reaction diphosphate + H2O = 2 phosphate + H(+). Functionally, phosphatase that hydrolyzes imidodiphosphate, 3-phosphohistidine and 6-phospholysine. Has broad substrate specificity and can also hydrolyze inorganic diphosphate, but with lower efficiency. This chain is Phospholysine phosphohistidine inorganic pyrophosphate phosphatase (LHPP), found in Bos taurus (Bovine).